Reading from the N-terminus, the 380-residue chain is Elongation factor Ts, mitochondrial (380 aa).

It belongs to the EF-Ts family.

Its subcellular location is the mitochondrion. In terms of biological role, associates with the EF-Tu.GDP complex and induces the exchange of GDP to GTP. It remains bound to the aminoacyl-tRNA.EF-Tu.GTP complex up to the GTP hydrolysis stage on the ribosome. This is Elongation factor Ts, mitochondrial from Plasmodium chabaudi chabaudi.